The chain runs to 371 residues: uncharacterized protein (371 aa).

This is an uncharacterized protein from Clostridium acetobutylicum (strain ATCC 824 / DSM 792 / JCM 1419 / IAM 19013 / LMG 5710 / NBRC 13948 / NRRL B-527 / VKM B-1787 / 2291 / W).